Reading from the N-terminus, the 364-residue chain is DNA polymerase IV (364 aa).

The region spanning 14–198 is the UmuC domain; that stretch reads IIHIDMDAFF…LPIEKFHGVG (185 aa). Positions 18 and 116 each coordinate Mg(2+). Glutamate 117 is an active-site residue.

Belongs to the DNA polymerase type-Y family. As to quaternary structure, monomer. The cofactor is Mg(2+).

The protein resides in the cytoplasm. It catalyses the reaction DNA(n) + a 2'-deoxyribonucleoside 5'-triphosphate = DNA(n+1) + diphosphate. Its function is as follows. Poorly processive, error-prone DNA polymerase involved in untargeted mutagenesis. Copies undamaged DNA at stalled replication forks, which arise in vivo from mismatched or misaligned primer ends. These misaligned primers can be extended by PolIV. Exhibits no 3'-5' exonuclease (proofreading) activity. May be involved in translesional synthesis, in conjunction with the beta clamp from PolIII. The sequence is that of DNA polymerase IV from Streptococcus agalactiae serotype Ia (strain ATCC 27591 / A909 / CDC SS700).